Consider the following 417-residue polypeptide: Serine hydroxymethyltransferase (417 aa).

(6S)-5,6,7,8-tetrahydrofolate-binding positions include Leu-121 and 125 to 127 (GHL). Residue Lys-229 is modified to N6-(pyridoxal phosphate)lysine. 355-357 (SPF) contributes to the (6S)-5,6,7,8-tetrahydrofolate binding site.

This sequence belongs to the SHMT family. In terms of assembly, homodimer. The cofactor is pyridoxal 5'-phosphate.

The protein localises to the cytoplasm. The catalysed reaction is (6R)-5,10-methylene-5,6,7,8-tetrahydrofolate + glycine + H2O = (6S)-5,6,7,8-tetrahydrofolate + L-serine. It participates in one-carbon metabolism; tetrahydrofolate interconversion. It functions in the pathway amino-acid biosynthesis; glycine biosynthesis; glycine from L-serine: step 1/1. Its function is as follows. Catalyzes the reversible interconversion of serine and glycine with tetrahydrofolate (THF) serving as the one-carbon carrier. This reaction serves as the major source of one-carbon groups required for the biosynthesis of purines, thymidylate, methionine, and other important biomolecules. Also exhibits THF-independent aldolase activity toward beta-hydroxyamino acids, producing glycine and aldehydes, via a retro-aldol mechanism. In Xanthomonas oryzae pv. oryzae (strain MAFF 311018), this protein is Serine hydroxymethyltransferase.